Here is a 159-residue protein sequence, read N- to C-terminus: MSDEEHQFESKADAGASKTYPQQAGTIRKGGHIVIKNRACKVVEVSTSKTGKHGHAKCHFVAIDIFNGKKLEDIVPSSHNCDVPHVNRTDYQLIDISEDGFVSLLTENGNTKDDLKLPTDDALLTQIKDGFGEGKDLVVSVMSAMGEEQICALKDIGPK.

A compositionally biased stretch (basic and acidic residues) spans 1–12 (MSDEEHQFESKA). Residues 1-23 (MSDEEHQFESKADAGASKTYPQQ) form a disordered region. Residue Lys52 is modified to Hypusine.

The protein belongs to the eIF-5A family. Post-translationally, lys-52 undergoes hypusination, a unique post-translational modification that consists in the addition of a butylamino group from spermidine to lysine side chain, leading to the formation of the unusual amino acid hypusine. eIF-5As are the only known proteins to undergo this modification, which is essential for their function.

Its function is as follows. Translation factor that promotes translation elongation and termination, particularly upon ribosome stalling at specific amino acid sequence contexts. Binds between the exit (E) and peptidyl (P) site of the ribosome and promotes rescue of stalled ribosome: specifically required for efficient translation of polyproline-containing peptides as well as other motifs that stall the ribosome. Acts as a ribosome quality control (RQC) cofactor by joining the RQC complex to facilitate peptidyl transfer during CAT tailing step. In Senecio vernalis (Spring groundsel), this protein is Eukaryotic translation initiation factor 5A (EIFSV1).